The primary structure comprises 131 residues: Transcription antitermination protein NusB (131 aa).

Belongs to the NusB family.

Functionally, involved in transcription antitermination. Required for transcription of ribosomal RNA (rRNA) genes. Binds specifically to the boxA antiterminator sequence of the ribosomal RNA (rrn) operons. The protein is Transcription antitermination protein NusB of Caldicellulosiruptor saccharolyticus (strain ATCC 43494 / DSM 8903 / Tp8T 6331).